The sequence spans 691 residues: F-box/LRR-repeat protein 5 (691 aa).

The interval 1–159 (MAPFPEEVDV…IKKKVIAQHC (159 aa)) is hemerythrin-like. Positions 15, 57, 58, 61, 80, 126, and 130 each coordinate Fe(3+). The F-box domain maps to 202–248 (STGITHLPPEVMLSIFSYLNPQELCRCSQVSMKWSQLTKTGSLWKHL). LRR repeat units lie at residues 340–364 (SSAV…LDLT), 365–392 (QTDI…DLSG), 393–418 (CEKI…QSGF), 479–508 (LWML…CVVE), 576–607 (TRLP…SLSG), 608–635 (CYQI…NLSG), and 636–661 (CLTI…YFYY). [2Fe-2S] cluster contacts are provided by Cys-662, Cys-676, Cys-686, and Cys-687.

As to quaternary structure, part of a SCF (SKP1-cullin-F-box) protein ligase complex. Interacts with ACO1/IRP1, IREB2/IRP2; the interaction depends on the [2Fe-2S] cluster. Interacts with DCTN1/p150-glued. The cofactor is [2Fe-2S] cluster. Post-translationally, polybiquitinated upon iron and oxygen depletion, leading to its degradation by the proteasome. Ubiquitination is regulated by the hemerythrin-like region that acts as an oxygen and iron sensor. Undergoes constitutive ubiquitin-dependent degradation at the steady state by HERC2.

The protein localises to the cytoplasm. It localises to the perinuclear region. The protein resides in the nucleus. It participates in protein modification; protein ubiquitination. An iron-sulfur cluster promotes IRP2 polyubiquitination and degradation in response to both iron and oxygen concentrations. Functionally, component of some SCF (SKP1-cullin-F-box) protein ligase complex that plays a central role in iron homeostasis by promoting the ubiquitination and subsequent degradation of IREB2/IRP2. The C-terminal domain of FBXL5 contains a redox-sensitive [2Fe-2S] cluster that, upon oxidation, promotes binding to IRP2 to effect its oxygen-dependent degradation. Under iron deficiency conditions, the N-terminal hemerythrin-like (Hr) region, which contains a diiron metal center, cannot bind iron and undergoes conformational changes that destabilize the FBXL5 protein and cause its ubiquitination and degradation. When intracellular iron levels start rising, the Hr region is stabilized. Additional increases in iron levels facilitate the assembly and incorporation of a redox active [2Fe-2S] cluster in the C-terminal domain. Only when oxygen level is high enough to maintain the cluster in its oxidized state can FBXL5 recruit IRP2 as a substrate for polyubiquination and degradation. Promotes ubiquitination and subsequent degradation of the dynactin complex component DCTN1. Within the nucleus, promotes the ubiquitination of SNAI1; preventing its interaction with DNA and promoting its degradation. Negatively regulates DNA damage response by mediating the ubiquitin-proteasome degradation of the DNA repair protein NABP2. In Pongo abelii (Sumatran orangutan), this protein is F-box/LRR-repeat protein 5 (FBXL5).